Here is an 880-residue protein sequence, read N- to C-terminus: DNA mismatch repair protein MutS (880 aa).

An ATP-binding site is contributed by 631–638; the sequence is GPNMAGKS. The interval 835–860 is disordered; sequence RAAPPPPAPAAPKTSPVEERLREIQP. Residues 850-860 show a composition bias toward basic and acidic residues; the sequence is PVEERLREIQP.

The protein belongs to the DNA mismatch repair MutS family.

Its function is as follows. This protein is involved in the repair of mismatches in DNA. It is possible that it carries out the mismatch recognition step. This protein has a weak ATPase activity. This chain is DNA mismatch repair protein MutS, found in Cereibacter sphaeroides (strain ATCC 17029 / ATH 2.4.9) (Rhodobacter sphaeroides).